Reading from the N-terminus, the 142-residue chain is Small ribosomal subunit protein uS12 (142 aa).

It belongs to the universal ribosomal protein uS12 family.

In Tetrahymena thermophila, this protein is Small ribosomal subunit protein uS12.